We begin with the raw amino-acid sequence, 370 residues long: Uroporphyrinogen decarboxylase (370 aa).

Residues 29-33 (RQAGR), Asp79, Tyr155, Ser210, and His342 contribute to the substrate site.

This sequence belongs to the uroporphyrinogen decarboxylase family. In terms of assembly, homodimer.

The protein resides in the cytoplasm. The enzyme catalyses uroporphyrinogen III + 4 H(+) = coproporphyrinogen III + 4 CO2. It functions in the pathway porphyrin-containing compound metabolism; protoporphyrin-IX biosynthesis; coproporphyrinogen-III from 5-aminolevulinate: step 4/4. Its function is as follows. Catalyzes the decarboxylation of four acetate groups of uroporphyrinogen-III to yield coproporphyrinogen-III. The polypeptide is Uroporphyrinogen decarboxylase (Acidovorax ebreus (strain TPSY) (Diaphorobacter sp. (strain TPSY))).